Reading from the N-terminus, the 477-residue chain is Exodeoxyribonuclease 7 large subunit (477 aa).

A disordered region spans residues 452 to 477 (KAAAAPKRVKKSPPPGTSGAQEDLFG).

The protein belongs to the XseA family. As to quaternary structure, heterooligomer composed of large and small subunits.

The protein resides in the cytoplasm. It carries out the reaction Exonucleolytic cleavage in either 5'- to 3'- or 3'- to 5'-direction to yield nucleoside 5'-phosphates.. Its function is as follows. Bidirectionally degrades single-stranded DNA into large acid-insoluble oligonucleotides, which are then degraded further into small acid-soluble oligonucleotides. This is Exodeoxyribonuclease 7 large subunit from Erythrobacter litoralis (strain HTCC2594).